Reading from the N-terminus, the 134-residue chain is 6,7-dimethyl-8-ribityllumazine synthase (134 aa).

5-amino-6-(D-ribitylamino)uracil-binding positions include Phe12, 44–46, and 68–70; these read VFD and SVI. Residue 73–74 coordinates (2S)-2-hydroxy-3-oxobutyl phosphate; sequence DT. Residue His76 is the Proton donor of the active site. Leu101 is a 5-amino-6-(D-ribitylamino)uracil binding site. Arg116 is a (2S)-2-hydroxy-3-oxobutyl phosphate binding site.

Belongs to the DMRL synthase family.

The catalysed reaction is (2S)-2-hydroxy-3-oxobutyl phosphate + 5-amino-6-(D-ribitylamino)uracil = 6,7-dimethyl-8-(1-D-ribityl)lumazine + phosphate + 2 H2O + H(+). The protein operates within cofactor biosynthesis; riboflavin biosynthesis; riboflavin from 2-hydroxy-3-oxobutyl phosphate and 5-amino-6-(D-ribitylamino)uracil: step 1/2. Its function is as follows. Catalyzes the formation of 6,7-dimethyl-8-ribityllumazine by condensation of 5-amino-6-(D-ribitylamino)uracil with 3,4-dihydroxy-2-butanone 4-phosphate. This is the penultimate step in the biosynthesis of riboflavin. The chain is 6,7-dimethyl-8-ribityllumazine synthase from Methanosarcina barkeri (strain Fusaro / DSM 804).